Here is a 556-residue protein sequence, read N- to C-terminus: MKSDIEIAQSVALQPITDIVKKVGIDGDDIELYGKYKAKLSFEKMKAVEANEPGKLLLVTAINPTPAGEGKSTMSIGLADALNQMGKKTMLALREPSLGPVMGIKGGAAGGGYAQVLPMEDINLHFTGDMHAITTANNALSALIDNHLQQGNDLGIDPRRIIWKRVLDLNDRALRQVIVGLGSPVNGVPREDGFDITVASEIMAILCLATDLKDLKKRLADIVVAYTYDRKPVYVRDLKVEGALTLILKDAIKPNLVQTIYGTPALIHGGPFANIAHGCNSVLATSTALRLADYTVTEAGFGADLGAEKFLNIKVPNLPKAPDAIVIVATLRALKMHGGVAKSDLAAENCEAVRLGFANLKRHVENMRQFKVPVVVAINEFVADTEAEIATLKALCEEIKVPVELASVWANGAEGGLALAKTAVRVIDQEAADYKRLYSDEDTLEEKVINIVTQIYGGKAVQFGPKAKTQLKQFAEFGWDKLPVCMAKTQYSFSDNPSLLGAPTDFDITIREFVPKTGAGFIVGLTGDVMTMPGLPKVPAAMAMDVAENGTALGLF.

Position 65 to 72 (65 to 72 (TPAGEGKS)) interacts with ATP.

Belongs to the formate--tetrahydrofolate ligase family.

The enzyme catalyses (6S)-5,6,7,8-tetrahydrofolate + formate + ATP = (6R)-10-formyltetrahydrofolate + ADP + phosphate. It participates in one-carbon metabolism; tetrahydrofolate interconversion. The chain is Formate--tetrahydrofolate ligase 1 from Streptococcus pyogenes serotype M18 (strain MGAS8232).